The following is a 254-amino-acid chain: Citrate synthase-lysine N-methyltransferase CSKMT, mitochondrial (254 aa).

The transit peptide at 1–45 (MLLNRFLVPLRSLQKLTQARRWHQTSLINDLVVNMDKKAMWDRFY) directs the protein to the mitochondrion.

Belongs to the methyltransferase superfamily.

Its subcellular location is the mitochondrion. It carries out the reaction L-lysyl-[citrate synthase] + S-adenosyl-L-methionine = N(6)-methyl-L-lysyl-[citrate synthase] + S-adenosyl-L-homocysteine + H(+). The catalysed reaction is N(6)-methyl-L-lysyl-[citrate synthase] + S-adenosyl-L-methionine = N(6),N(6)-dimethyl-L-lysyl-[citrate synthase] + S-adenosyl-L-homocysteine + H(+). The enzyme catalyses N(6),N(6)-dimethyl-L-lysyl-[citrate synthase] + S-adenosyl-L-methionine = N(6),N(6),N(6)-trimethyl-L-lysyl-[citrate synthase] + S-adenosyl-L-homocysteine + H(+). Citrate synthase-lysine methyltransferase activity is inhibited by S-adenosylhomocysteine (AdoHcy) and oxaloacetate (OAA). Protein-lysine methyltransferase that selectively trimethylates citrate synthase (CS) in mitochondria. Seems to conduct trimethylation in a highly distributive manner rather than in a processive manner, and thus introduces a single methyl group per binding event. The protein is Citrate synthase-lysine N-methyltransferase CSKMT, mitochondrial of Danio rerio (Zebrafish).